A 106-amino-acid polypeptide reads, in one-letter code: Large ribosomal subunit protein uL24 (106 aa).

The span at 84 to 97 (EKIGRELGAKEKAR) shows a compositional bias: basic and acidic residues. Positions 84–106 (EKIGRELGAKEKARLQKRKTAAK) are disordered.

The protein belongs to the universal ribosomal protein uL24 family. Part of the 50S ribosomal subunit.

Functionally, one of two assembly initiator proteins, it binds directly to the 5'-end of the 23S rRNA, where it nucleates assembly of the 50S subunit. One of the proteins that surrounds the polypeptide exit tunnel on the outside of the subunit. The protein is Large ribosomal subunit protein uL24 of Anaeromyxobacter dehalogenans (strain 2CP-1 / ATCC BAA-258).